A 200-amino-acid polypeptide reads, in one-letter code: Somatotropin (200 aa).

An N-terminal signal peptide occupies residues 1–22 (MARVLVVLSVVVASLFFSQGAT). His38 contacts Zn(2+). Cys71 and Cys173 are disulfide-bonded. Glu182 provides a ligand contact to Zn(2+). An intrachain disulfide couples Cys190 to Cys198.

This sequence belongs to the somatotropin/prolactin family.

Its subcellular location is the secreted. Its function is as follows. Growth hormone plays an important role in growth control and is involved in the regulation of several anabolic processes. Implicated as an osmoregulatory substance important for seawater adaptation. This chain is Somatotropin (gh), found in Pangasianodon gigas (Mekong giant catfish).